A 479-amino-acid polypeptide reads, in one-letter code: UDP-N-acetylmuramoyl-L-alanyl-D-glutamate--2,6-diaminopimelate ligase (479 aa).

Serine 21 contacts UDP-N-acetyl-alpha-D-muramoyl-L-alanyl-D-glutamate. Residue 98–104 (GTNGKSS) participates in ATP binding. UDP-N-acetyl-alpha-D-muramoyl-L-alanyl-D-glutamate-binding positions include 144–145 (TT), serine 171, glutamine 177, and arginine 179. Position 211 is an N6-carboxylysine (lysine 211). Meso-2,6-diaminopimelate is bound by residues arginine 372, 396-399 (DNPR), glycine 446, and glutamate 450. The short motif at 396–399 (DNPR) is the Meso-diaminopimelate recognition motif element.

It belongs to the MurCDEF family. MurE subfamily. Mg(2+) serves as cofactor. Carboxylation is probably crucial for Mg(2+) binding and, consequently, for the gamma-phosphate positioning of ATP.

It is found in the cytoplasm. It catalyses the reaction UDP-N-acetyl-alpha-D-muramoyl-L-alanyl-D-glutamate + meso-2,6-diaminopimelate + ATP = UDP-N-acetyl-alpha-D-muramoyl-L-alanyl-gamma-D-glutamyl-meso-2,6-diaminopimelate + ADP + phosphate + H(+). It functions in the pathway cell wall biogenesis; peptidoglycan biosynthesis. In terms of biological role, catalyzes the addition of meso-diaminopimelic acid to the nucleotide precursor UDP-N-acetylmuramoyl-L-alanyl-D-glutamate (UMAG) in the biosynthesis of bacterial cell-wall peptidoglycan. In Rickettsia rickettsii, this protein is UDP-N-acetylmuramoyl-L-alanyl-D-glutamate--2,6-diaminopimelate ligase.